Consider the following 146-residue polypeptide: Anti-sigma F factor (146 aa).

Belongs to the anti-sigma-factor family.

It catalyses the reaction L-seryl-[protein] + ATP = O-phospho-L-seryl-[protein] + ADP + H(+). It carries out the reaction L-threonyl-[protein] + ATP = O-phospho-L-threonyl-[protein] + ADP + H(+). In terms of biological role, binds to sigma F and blocks its ability to form an RNA polymerase holoenzyme (E-sigma F). Phosphorylates SpoIIAA on a serine residue. This phosphorylation may enable SpoIIAA to act as an anti-anti-sigma factor that counteracts SpoIIAB and thus releases sigma F from inhibition. This is Anti-sigma F factor from Bacillus anthracis (strain A0248).